Reading from the N-terminus, the 450-residue chain is Glucose-6-phosphate isomerase (450 aa).

The residue at position 39 (T39) is a Phosphothreonine. E291 (proton donor) is an active-site residue. Catalysis depends on residues H312 and K426.

This sequence belongs to the GPI family.

Its subcellular location is the cytoplasm. The enzyme catalyses alpha-D-glucose 6-phosphate = beta-D-fructose 6-phosphate. It functions in the pathway carbohydrate biosynthesis; gluconeogenesis. Its pathway is carbohydrate degradation; glycolysis; D-glyceraldehyde 3-phosphate and glycerone phosphate from D-glucose: step 2/4. In terms of biological role, catalyzes the reversible isomerization of glucose-6-phosphate to fructose-6-phosphate. The chain is Glucose-6-phosphate isomerase from Bacillus anthracis.